A 676-amino-acid chain; its full sequence is Methionine--tRNA ligase (676 aa).

The 'HIGH' region signature appears at proline 15–histidine 25. Positions 146, 149, 159, and 162 each coordinate Zn(2+). Positions lysine 332–serine 336 match the 'KMSKS' region motif. Residue lysine 335 participates in ATP binding. Residues aspartate 574–lysine 676 enclose the tRNA-binding domain.

Belongs to the class-I aminoacyl-tRNA synthetase family. MetG type 1 subfamily. As to quaternary structure, homodimer. Requires Zn(2+) as cofactor.

Its subcellular location is the cytoplasm. The enzyme catalyses tRNA(Met) + L-methionine + ATP = L-methionyl-tRNA(Met) + AMP + diphosphate. Functionally, is required not only for elongation of protein synthesis but also for the initiation of all mRNA translation through initiator tRNA(fMet) aminoacylation. This is Methionine--tRNA ligase from Pectobacterium atrosepticum (strain SCRI 1043 / ATCC BAA-672) (Erwinia carotovora subsp. atroseptica).